The following is an 884-amino-acid chain: Valine--tRNA ligase (884 aa).

Positions 43–53 (PNVTGSLHIGH) match the 'HIGH' region motif. Positions 530–534 (KMSKS) match the 'KMSKS' region motif. Lys533 lines the ATP pocket. Positions 817 to 884 (VIDLDAERGR…KLKAALERLM (68 aa)) form a coiled coil.

Belongs to the class-I aminoacyl-tRNA synthetase family. ValS type 1 subfamily. Monomer.

It is found in the cytoplasm. The catalysed reaction is tRNA(Val) + L-valine + ATP = L-valyl-tRNA(Val) + AMP + diphosphate. Catalyzes the attachment of valine to tRNA(Val). As ValRS can inadvertently accommodate and process structurally similar amino acids such as threonine, to avoid such errors, it has a 'posttransfer' editing activity that hydrolyzes mischarged Thr-tRNA(Val) in a tRNA-dependent manner. This chain is Valine--tRNA ligase, found in Zymomonas mobilis subsp. mobilis (strain ATCC 31821 / ZM4 / CP4).